We begin with the raw amino-acid sequence, 177 residues long: Large ribosomal subunit protein uL22 (177 aa).

The interval 118-177 is disordered; that stretch reads VESRPSREGRRGGAGESAGGARARRAQGSKAAAAKKAPASSSTKAATTTEASEEAKGGSQ. Residues 121–130 are compositionally biased toward basic and acidic residues; that stretch reads RPSREGRRGG. The span at 145–167 shows a compositional bias: low complexity; it reads GSKAAAAKKAPASSSTKAATTTE.

The protein belongs to the universal ribosomal protein uL22 family. In terms of assembly, part of the 50S ribosomal subunit.

Its function is as follows. This protein binds specifically to 23S rRNA; its binding is stimulated by other ribosomal proteins, e.g. L4, L17, and L20. It is important during the early stages of 50S assembly. It makes multiple contacts with different domains of the 23S rRNA in the assembled 50S subunit and ribosome. The globular domain of the protein is located near the polypeptide exit tunnel on the outside of the subunit, while an extended beta-hairpin is found that lines the wall of the exit tunnel in the center of the 70S ribosome. The sequence is that of Large ribosomal subunit protein uL22 from Mycobacterium sp. (strain JLS).